The primary structure comprises 168 residues: Cyanate hydratase (168 aa).

Active-site residues include Arg94, Glu97, and Ser120.

Belongs to the cyanase family.

The enzyme catalyses cyanate + hydrogencarbonate + 3 H(+) = NH4(+) + 2 CO2. Catalyzes the reaction of cyanate with bicarbonate to produce ammonia and carbon dioxide. In Oryza sativa subsp. indica (Rice), this protein is Cyanate hydratase.